A 438-amino-acid polypeptide reads, in one-letter code: UDP-N-acetylmuramoylalanine--D-glutamate ligase (438 aa).

112–118 (GSNGKST) is a binding site for ATP.

Belongs to the MurCDEF family.

Its subcellular location is the cytoplasm. The catalysed reaction is UDP-N-acetyl-alpha-D-muramoyl-L-alanine + D-glutamate + ATP = UDP-N-acetyl-alpha-D-muramoyl-L-alanyl-D-glutamate + ADP + phosphate + H(+). It functions in the pathway cell wall biogenesis; peptidoglycan biosynthesis. Its function is as follows. Cell wall formation. Catalyzes the addition of glutamate to the nucleotide precursor UDP-N-acetylmuramoyl-L-alanine (UMA). The chain is UDP-N-acetylmuramoylalanine--D-glutamate ligase from Shigella boydii serotype 4 (strain Sb227).